Reading from the N-terminus, the 124-residue chain is Small ribosomal subunit protein uS12 (124 aa).

Positions 1–25 (MATINQLVRKPRQATTYKSASPALD) are disordered. 3-methylthioaspartic acid is present on D89.

Belongs to the universal ribosomal protein uS12 family. As to quaternary structure, part of the 30S ribosomal subunit. Contacts proteins S8 and S17. May interact with IF1 in the 30S initiation complex.

Functionally, with S4 and S5 plays an important role in translational accuracy. Interacts with and stabilizes bases of the 16S rRNA that are involved in tRNA selection in the A site and with the mRNA backbone. Located at the interface of the 30S and 50S subunits, it traverses the body of the 30S subunit contacting proteins on the other side and probably holding the rRNA structure together. The combined cluster of proteins S8, S12 and S17 appears to hold together the shoulder and platform of the 30S subunit. The polypeptide is Small ribosomal subunit protein uS12 (Xanthomonas campestris pv. campestris (strain 8004)).